The primary structure comprises 626 residues: DNA mismatch repair protein MutL (626 aa).

Belongs to the DNA mismatch repair MutL/HexB family.

This protein is involved in the repair of mismatches in DNA. It is required for dam-dependent methyl-directed DNA mismatch repair. May act as a 'molecular matchmaker', a protein that promotes the formation of a stable complex between two or more DNA-binding proteins in an ATP-dependent manner without itself being part of a final effector complex. The sequence is that of DNA mismatch repair protein MutL from Cellvibrio japonicus (strain Ueda107) (Pseudomonas fluorescens subsp. cellulosa).